A 507-amino-acid polypeptide reads, in one-letter code: 3-octaprenyl-4-hydroxybenzoate carboxy-lyase (507 aa).

N177 serves as a coordination point for Mn(2+). Prenylated FMN is bound by residues I180–R182, R194–L196, and R199–G200. Position 243 (E243) interacts with Mn(2+). The active-site Proton donor is the D302.

This sequence belongs to the UbiD family. Homohexamer. The cofactor is prenylated FMN. Mn(2+) serves as cofactor.

The protein resides in the cell membrane. It carries out the reaction a 4-hydroxy-3-(all-trans-polyprenyl)benzoate + H(+) = a 2-(all-trans-polyprenyl)phenol + CO2. The protein operates within cofactor biosynthesis; ubiquinone biosynthesis. Functionally, catalyzes the decarboxylation of 3-octaprenyl-4-hydroxy benzoate to 2-octaprenylphenol, an intermediate step in ubiquinone biosynthesis. The chain is 3-octaprenyl-4-hydroxybenzoate carboxy-lyase from Cupriavidus metallidurans (strain ATCC 43123 / DSM 2839 / NBRC 102507 / CH34) (Ralstonia metallidurans).